A 68-amino-acid polypeptide reads, in one-letter code: Arabinogalactan peptide 1 (68 aa).

The N-terminal stretch at 1 to 30 is a signal peptide; sequence MAGQLKSKIVAVAVAAVVVVASSLVGTASA. Ser40 is lipidated: GPI-anchor amidated serine. The propeptide at 41-68 is removed in mature form; sequence GATATAAAAPAFAAVSVAAAALGGYLFC.

It belongs to the AG-peptide AGP family. Post-translationally, O-glycosylated on hydroxyprolines; noncontiguous hydroxylproline residues are glycosylated with arabinogalactan. As to expression, expressed in roots, stems, flowers and seeds.

The protein resides in the vacuole. It is found in the aleurone grain membrane. In terms of biological role, proteoglycan that seems to be implicated in diverse developmental roles such as differentiation, cell-cell recognition, embryogenesis and programmed cell death. The chain is Arabinogalactan peptide 1 (AGPEP1) from Oryza sativa subsp. japonica (Rice).